Reading from the N-terminus, the 216-residue chain is Ras-related protein RABA1b (216 aa).

20-27 (GDSGVGKS) contributes to the GTP binding site. The short motif at 42–50 (SKSTIGVEF) is the Effector region element. Residues 68–72 (DTAGQ), 126–129 (NKSD), and 156–157 (SA) each bind GTP. 2 S-geranylgeranyl cysteine lipidation sites follow: C213 and C214.

It belongs to the small GTPase superfamily. Rab family.

The protein localises to the cell membrane. Its function is as follows. Intracellular vesicle trafficking and protein transport. The chain is Ras-related protein RABA1b (RABA1B) from Arabidopsis thaliana (Mouse-ear cress).